Here is a 162-residue protein sequence, read N- to C-terminus: Ribosome maturation factor RimP (162 aa).

This sequence belongs to the RimP family.

Its subcellular location is the cytoplasm. In terms of biological role, required for maturation of 30S ribosomal subunits. The chain is Ribosome maturation factor RimP from Ralstonia pickettii (strain 12J).